The chain runs to 124 residues: Fluoride-specific ion channel FluC (124 aa).

Helical transmembrane passes span 1 to 21 (MVPL…LRFA), 38 to 58 (TLAV…LFLI), 69 to 89 (GLMV…LDTV), and 99 to 119 (LALG…WAGL). Positions 76 and 79 each coordinate Na(+).

The protein belongs to the fluoride channel Fluc/FEX (TC 1.A.43) family.

The protein localises to the cell inner membrane. The catalysed reaction is fluoride(in) = fluoride(out). With respect to regulation, na(+) is not transported, but it plays an essential structural role and its presence is essential for fluoride channel function. Fluoride-specific ion channel. Important for reducing fluoride concentration in the cell, thus reducing its toxicity. This chain is Fluoride-specific ion channel FluC, found in Pseudomonas fluorescens (strain Pf0-1).